The chain runs to 217 residues: Elongation factor Ts (217 aa).

Positions 82–85 (TDFV) are involved in Mg(2+) ion dislocation from EF-Tu.

It belongs to the EF-Ts family.

The protein resides in the cytoplasm. In terms of biological role, associates with the EF-Tu.GDP complex and induces the exchange of GDP to GTP. It remains bound to the aminoacyl-tRNA.EF-Tu.GTP complex up to the GTP hydrolysis stage on the ribosome. The protein is Elongation factor Ts of Prochlorococcus marinus (strain SARG / CCMP1375 / SS120).